The primary structure comprises 2005 residues: Sodium channel protein type 2 subunit alpha (2005 aa).

The Cytoplasmic segment spans residues 1–129; sequence MAQSVLVPPG…KLAIKILVHS (129 aa). A Phosphoserine modification is found at serine 4. The interval 28–61 is disordered; the sequence is RIAEEKAKRPKQERKDEDDENGPKPNSDLEAGKS. Residue lysine 38 forms a Glycyl lysine isopeptide (Lys-Gly) (interchain with G-Cter in SUMO1) linkage. One copy of the I repeat lies at 111-456; the sequence is ILTPFNPIRK…QQMLEQLKKQ (346 aa). The helical transmembrane segment at 130-148 threads the bilayer; that stretch reads LFNMLIMCTILTNCVFMTM. Residues 149–155 lie on the Extracellular side of the membrane; that stretch reads SNPPDWT. The helical transmembrane segment at 156-176 threads the bilayer; the sequence is KNVEYTFTGIYTFESLIKILA. Over 177 to 190 the chain is Cytoplasmic; the sequence is RGFCLEDFTFLRDP. Residues 191-208 form a helical membrane-spanning segment; sequence WNWLDFTVITFAYVTEFV. The Extracellular segment spans residues 209-214; that stretch reads DLGNVS. Asparagine 212 carries N-linked (GlcNAc...) asparagine glycosylation. A helical transmembrane segment spans residues 215–231; that stretch reads ALRTFRVLRALKTISVI. The Cytoplasmic portion of the chain corresponds to 232–250; the sequence is PGLKTIVGALIQSVKKLSD. The helical transmembrane segment at 251 to 270 threads the bilayer; that stretch reads VMILTVFCLSVFALIGLQLF. The Extracellular portion of the chain corresponds to 271–369; the sequence is MGNLRNKCLQ…PNYGYTSFDT (99 aa). Cysteine 278 and cysteine 338 are disulfide-bonded. N-linked (GlcNAc...) asparagine glycans are attached at residues asparagine 285, asparagine 291, asparagine 297, asparagine 303, asparagine 308, and asparagine 340. The segment at residues 370–394 is an intramembrane region (pore-forming); sequence FSWAFLSLFRLMTQDFWENLYQLTL. Topologically, residues 395 to 401 are extracellular; the sequence is RAAGKTY. The helical transmembrane segment at 402–422 threads the bilayer; it reads MIFFVLVIFLGSFYLINLILA. Over 423 to 759 the chain is Cytoplasmic; sequence VVAMAYEEQN…HLVNLVVMDP (337 aa). Phosphoserine occurs at positions 468, 471, 484, 526, 528, 531, 553, 554, 558, 573, 576, 589, 610, 623, 686, 687, and 721. The interval 494–529 is disordered; that stretch reads SSKSEKELKNRRKKKKQKEQSGEEEKNDRVRKSESE. Residues 511–529 show a composition bias toward basic and acidic residues; it reads KEQSGEEEKNDRVRKSESE. The disordered stretch occupies residues 590–610; it reads ENDFADDEHSTFEDNDSRRDS. Over residues 596–610 the composition is skewed to basic and acidic residues; it reads DEHSTFEDNDSRRDS. The stretch at 741-1013 is one II repeat; it reads CCKPWLKVKH…QIAVGRMQKG (273 aa). The helical transmembrane segment at 760–778 threads the bilayer; sequence FVDLAITICIVLNTLFMAM. Residues 779-789 are Extracellular-facing; that stretch reads EHYPMTEQFSS. The helical transmembrane segment at 790-809 threads the bilayer; sequence VLSVGNLVFTGIFTAEMFLK. Topologically, residues 810 to 823 are cytoplasmic; sequence IIAMDPYYYFQEGW. A helical membrane pass occupies residues 824 to 843; the sequence is NIFDGFIVSLSLMELGLANV. Over 844-845 the chain is Extracellular; that stretch reads EG. A helical transmembrane segment spans residues 846-863; it reads LSVLRSFRLLRVFKLAKS. Topologically, residues 864–879 are cytoplasmic; it reads WPTLNMLIKIIGNSVG. Residues 880–898 traverse the membrane as a helical segment; that stretch reads ALGNLTLVLAIIVFIFAVV. The Extracellular portion of the chain corresponds to 899-927; it reads GMQLFGKSYKECVCKISNDCELPRWHMHD. A disulfide bridge connects residues cysteine 912 and cysteine 918. A binds SCN2B region spans residues 917 to 918; it reads DC. The segment at residues 928–948 is an intramembrane region (pore-forming); it reads FFHSFLIVFRVLCGEWIETMW. The Extracellular portion of the chain corresponds to 949-961; the sequence is DCMEVAGQTMCLT. Cysteine 950 and cysteine 959 are disulfide-bonded. A helical transmembrane segment spans residues 962-982; it reads VFMMVMVIGNLVVLNLFLALL. Residues 983 to 1209 are Cytoplasmic-facing; that stretch reads LSSFSSDNLA…TCYKIVEHNW (227 aa). The segment at 1120–1165 is disordered; the sequence is EEFSSESDMEESKEKLNATSSSEGSTVDIGAPAEGEQPEVEPEESL. The segment covering 1155-1165 has biased composition (acidic residues); the sequence is EQPEVEPEESL. One copy of the III repeat lies at 1190–1504; it reads KGKLWWNLRK…KKYYNAMKKL (315 aa). A helical transmembrane segment spans residues 1210–1227; it reads FETFIVFMILLSSGALAF. Residues 1228–1240 lie on the Extracellular side of the membrane; that stretch reads EDIYIEQRKTIKT. A helical membrane pass occupies residues 1241-1259; it reads MLEYADKVFTYIFILEMLL. At 1260–1273 the chain is on the cytoplasmic side; the sequence is KWVAYGFQVYFTNA. A helical membrane pass occupies residues 1274–1292; that stretch reads WCWLDFLIVDVSLVSLTAN. At 1293–1300 the chain is on the extracellular side; sequence ALGYSELG. A helical membrane pass occupies residues 1301 to 1319; it reads AIKSLRTLRALRPLRALSR. The Cytoplasmic segment spans residues 1320 to 1336; it reads FEGMRVVVNALLGAIPS. A helical transmembrane segment spans residues 1337–1356; sequence IMNVLLVCLIFWLIFSIMGV. At 1357 to 1408 the chain is on the extracellular side; sequence NLFAGKFYHCINYTTGEMFDVSVVNNYSECKALIESNQTARWKNVKVNFDNV. Cysteine 1366 and cysteine 1386 are disulfide-bonded. N-linked (GlcNAc...) asparagine glycans are attached at residues asparagine 1368, asparagine 1382, and asparagine 1393. The segment at residues 1409-1430 is an intramembrane region (pore-forming); it reads GLGYLSLLQVATFKGWMDIMYA. The Extracellular segment spans residues 1431–1447; that stretch reads AVDSRNVELQPKYEDNL. The helical transmembrane segment at 1448–1469 threads the bilayer; that stretch reads YMYLYFVIFIIFGSFFTLNLFI. The Cytoplasmic portion of the chain corresponds to 1470-1532; sequence GVIIDNFNQQ…MVFDFVTKQV (63 aa). Serine 1506 is modified (phosphoserine; by PKC). One copy of the IV repeat lies at 1513-1811; the sequence is IPRPANKFQG…WEKFDPDATQ (299 aa). The helical transmembrane segment at 1533 to 1550 threads the bilayer; that stretch reads FDISIMILICLNMVTMMV. Residues 1551–1561 are Extracellular-facing; that stretch reads ETDDQSQEMTN. The helical transmembrane segment at 1562–1580 threads the bilayer; sequence ILYWINLVFIVLFTGECVL. Residues 1581-1592 lie on the Cytoplasmic side of the membrane; the sequence is KLISLRYYYFTI. The helical transmembrane segment at 1593 to 1610 threads the bilayer; that stretch reads GWNIFDFVVVILSIVGMF. At 1611–1623 the chain is on the extracellular side; it reads LAELIEKYFVSPT. The chain crosses the membrane as a helical span at residues 1624–1640; that stretch reads LFRVIRLARIGRILRLI. Residues 1641-1659 are Cytoplasmic-facing; it reads KGAKGIRTLLFALMMSLPA. Residues 1660–1677 traverse the membrane as a helical segment; the sequence is LFNIGLLLFLVMFIYAIF. At 1678-1699 the chain is on the extracellular side; sequence GMSNFAYVKREVGIDDMFNFET. The pore-forming intramembrane region spans 1700–1722; that stretch reads FGNSMICLFQITTSAGWDGLLAP. The Extracellular portion of the chain corresponds to 1723–1752; the sequence is ILNSGPPDCDPDKDHPGSSVKGDCGNPSVG. Cysteine 1731 and cysteine 1746 are disulfide-bonded. The helical transmembrane segment at 1753–1775 threads the bilayer; it reads IFFFVSYIIISFLVVVNMYIAVI. The Cytoplasmic portion of the chain corresponds to 1776-2005; the sequence is LENFSVATEE…KGKDIRESKK (230 aa). Residues 1905–1934 enclose the IQ domain; the sequence is EEVSAIIIQRAYRRYLLKQKVKKVSSIYKK. Serine 1930 carries the phosphoserine modification. The segment covering 1935–1964 has biased composition (basic and acidic residues); that stretch reads DKGKECDGTPIKEDTLIDKLNENSTPEKTD. The interval 1935-2005 is disordered; that stretch reads DKGKECDGTP…KGKDIRESKK (71 aa). 3 positions are modified to phosphothreonine: threonine 1943, threonine 1963, and threonine 1966. The residue at position 1971 (serine 1971) is a Phosphoserine. Positions 1979-2005 are enriched in basic and acidic residues; that stretch reads TKPEKEKFEKDKSEKEDKGKDIRESKK.

Belongs to the sodium channel (TC 1.A.1.10) family. Nav1.2/SCN2A subfamily. As to quaternary structure, heterooligomer of a large alpha subunit and a smaller beta subunit. Heterooligomer with SCN2B or SCN4B; disulfide-linked. Heterooligomer with SCN1B or SCN3B; non-covalently linked. Interacts with NEDD4L. Interacts with CALM. Interacts with TMEM233. Interacts with the conotoxin GVIIJ. Interacts with the spider beta/delta-theraphotoxin-Pre1a. Interacts with the conotoxin KIIIA. Interacts with the spider protoxin-II. Post-translationally, may be ubiquitinated by NEDD4L; which would promote its endocytosis. In terms of processing, phosphorylation at Ser-1506 by PKC in a highly conserved cytoplasmic loop slows inactivation of the sodium channel and reduces peak sodium currents. Sumoylated at Lys-38. Sumoylation is induced by hypoxia, increases voltage-gated sodium current and mediates the early response to acute hypoxia in neurons. Sumoylated SCN2A is located at the cell membrane.

It localises to the cell membrane. The catalysed reaction is Na(+)(in) = Na(+)(out). In terms of biological role, mediates the voltage-dependent sodium ion permeability of excitable membranes. Assuming opened or closed conformations in response to the voltage difference across the membrane, the protein forms a sodium-selective channel through which Na(+) ions may pass in accordance with their electrochemical gradient. Implicated in the regulation of hippocampal replay occurring within sharp wave ripples (SPW-R) important for memory. The sequence is that of Sodium channel protein type 2 subunit alpha from Homo sapiens (Human).